Reading from the N-terminus, the 327-residue chain is Protein MRG2 (327 aa).

The tract at residues 1 to 40 is disordered; sequence MGSPNAAAETDLTTDDFIGDTRRDSGSDTETNTDCDGEDL. The Tudor-knot domain occupies 52–101; sequence FEEGERVLAKHSDCFYEAKVLKVEFKDNEWKYFVHYIGWNKSWDEWIRLD. The tract at residues 133–156 is disordered; that stretch reads SKMKPRSPNVARGRKRKQDSVDTE. An MRG domain is found at 162 to 327; the sequence is SDNLLSFNIP…AVEEMEKKEG (166 aa).

As to quaternary structure, interacts with HAM1 and HAM2. Interacts (via MRG domain) with CO. Component of the NuA4 histone acetyltransferase complex. As to expression, ubiquitous. Mainly expressed in the vasculature of cotyledons and leaves, and in roots and inflorescences.

The protein resides in the nucleus. Chromatin remodeling factor. Acts as a 'reader' protein by binding to H3K4me3 and H3K36me3 to control histone H4 acetylation. Increases the transcriptional levels of the flowering time genes FLC and FT. Binds the chromatin at the FT promoter upon interaction with CO. The sequence is that of Protein MRG2 from Arabidopsis thaliana (Mouse-ear cress).